The sequence spans 33 residues: ISLAQIKKLLQIIKQGLKAICDNRDLIAKGCQA.

This sequence belongs to the myrmexin family. As to quaternary structure, heterodimer composed of subunit LS2 and subunit SS1, heterodimer composed of subunit LS2 and SS2, and heterodimer composed of subunit LS2 and SS3; disulfide-linked. As to expression, expressed by the venom gland.

Its subcellular location is the secreted. Its function is as follows. This heterodimer may have anti-inflammatory properties, since the myrmexin complex (composed of 6 SS-LS heterodimers) inhibits carrageenin-induced edema in a dose-dependent manner (after subcutaneous injection into rats). This Pseudomyrmex triplarinus (Ant) protein is U1-pseudomyrmecitoxin-Pt1 subunit LS2.